The sequence spans 186 residues: Probable RNA 2'-phosphotransferase (186 aa).

It belongs to the KptA/TPT1 family.

Removes the 2'-phosphate from RNA via an intermediate in which the phosphate is ADP-ribosylated by NAD followed by a presumed transesterification to release the RNA and generate ADP-ribose 1''-2''-cyclic phosphate (APPR&gt;P). May function as an ADP-ribosylase. This Pectobacterium carotovorum subsp. carotovorum (strain PC1) protein is Probable RNA 2'-phosphotransferase.